The chain runs to 522 residues: tRNA-2-methylthio-N(6)-dimethylallyladenosine synthase (522 aa).

A compositionally biased stretch (low complexity) spans 1–26 (MSLTIPSPASGTSTSATTDTAPAAAP). A disordered region spans residues 1 to 27 (MSLTIPSPASGTSTSATTDTAPAAAPQ). In terms of domain architecture, MTTase N-terminal spans 28–143 (RTYQVRTFGC…LPALLDRARH (116 aa)). [4Fe-4S] cluster contacts are provided by C37, C72, C106, C180, C184, and C187. Residues 166-396 (RDSVYSGWVS…TALQDRIAAE (231 aa)) enclose the Radical SAM core domain. A TRAM domain is found at 399–469 (ARQLGRRVEV…AFHLVADPAS (71 aa)). The tract at residues 481–522 (GDAWDRSQADSCGAPVAGGGAGSNGGKGGVSLGMPALPVRRS) is disordered. The span at 496 to 511 (VAGGGAGSNGGKGGVS) shows a compositional bias: gly residues.

The protein belongs to the methylthiotransferase family. MiaB subfamily. In terms of assembly, monomer. [4Fe-4S] cluster is required as a cofactor.

The protein resides in the cytoplasm. It carries out the reaction N(6)-dimethylallyladenosine(37) in tRNA + (sulfur carrier)-SH + AH2 + 2 S-adenosyl-L-methionine = 2-methylsulfanyl-N(6)-dimethylallyladenosine(37) in tRNA + (sulfur carrier)-H + 5'-deoxyadenosine + L-methionine + A + S-adenosyl-L-homocysteine + 2 H(+). Functionally, catalyzes the methylthiolation of N6-(dimethylallyl)adenosine (i(6)A), leading to the formation of 2-methylthio-N6-(dimethylallyl)adenosine (ms(2)i(6)A) at position 37 in tRNAs that read codons beginning with uridine. This Arthrobacter sp. (strain FB24) protein is tRNA-2-methylthio-N(6)-dimethylallyladenosine synthase.